The sequence spans 270 residues: Formamidopyrimidine-DNA glycosylase (270 aa).

Residue Pro2 is the Schiff-base intermediate with DNA of the active site. The active-site Proton donor is Glu3. Lys58 (proton donor; for beta-elimination activity) is an active-site residue. Positions 91, 110, and 151 each coordinate DNA. The FPG-type zinc-finger motif lies at 236–270 (AVYGREGEPCTHCGAPLQGVRIGGRATIYCSQCQR). Arg260 acts as the Proton donor; for delta-elimination activity in catalysis.

Belongs to the FPG family. Monomer. Zn(2+) serves as cofactor.

It carries out the reaction Hydrolysis of DNA containing ring-opened 7-methylguanine residues, releasing 2,6-diamino-4-hydroxy-5-(N-methyl)formamidopyrimidine.. It catalyses the reaction 2'-deoxyribonucleotide-(2'-deoxyribose 5'-phosphate)-2'-deoxyribonucleotide-DNA = a 3'-end 2'-deoxyribonucleotide-(2,3-dehydro-2,3-deoxyribose 5'-phosphate)-DNA + a 5'-end 5'-phospho-2'-deoxyribonucleoside-DNA + H(+). In terms of biological role, involved in base excision repair of DNA damaged by oxidation or by mutagenic agents. Acts as a DNA glycosylase that recognizes and removes damaged bases. Has a preference for oxidized purines, such as 7,8-dihydro-8-oxoguanine (8-oxoG). Has AP (apurinic/apyrimidinic) lyase activity and introduces nicks in the DNA strand. Cleaves the DNA backbone by beta-delta elimination to generate a single-strand break at the site of the removed base with both 3'- and 5'-phosphates. The chain is Formamidopyrimidine-DNA glycosylase from Acidithiobacillus ferrooxidans (strain ATCC 23270 / DSM 14882 / CIP 104768 / NCIMB 8455) (Ferrobacillus ferrooxidans (strain ATCC 23270)).